Here is a 115-residue protein sequence, read N- to C-terminus: Immunoglobulin kappa variable 5-48 (115 aa).

An N-terminal signal peptide occupies residues 1–20 (MVSTPQFLVFLLFWIPASRG). Positions 21-43 (DILLTQSPAILSVSPGERVSFSC) are framework-1. C43 and C108 are joined by a disulfide. The segment at 44–54 (RASQSIGTSIH) is complementarity-determining-1. The segment at 55-69 (WYQQRTNGSPRLLIK) is framework-2. The tract at residues 70–76 (YASESIS) is complementarity-determining-2. Residues 77–108 (GIPSRFSGSGSGTDFTLSINSVESEDIADYYC) are framework-3. Positions 109 to 115 (QQSNSWP) are complementarity-determining-3.

In Mus musculus (Mouse), this protein is Immunoglobulin kappa variable 5-48.